The sequence spans 304 residues: D-alanine--D-alanine ligase (304 aa).

The ATP-grasp domain maps to 100–301 (KLVALQSGIP…FGEFLEDLIK (202 aa)). 129 to 184 (ERKLGSPFIVKPCDVGSTIGLSLVRSASEYEVALEEAFRFSDRLLLEEFIDGFEVT) provides a ligand contact to ATP. The Mg(2+) site is built by Asp256, Glu268, and Asn270.

The protein belongs to the D-alanine--D-alanine ligase family. Mg(2+) serves as cofactor. It depends on Mn(2+) as a cofactor.

It localises to the cytoplasm. It catalyses the reaction 2 D-alanine + ATP = D-alanyl-D-alanine + ADP + phosphate + H(+). It functions in the pathway cell wall biogenesis; peptidoglycan biosynthesis. Functionally, cell wall formation. The protein is D-alanine--D-alanine ligase of Coprothermobacter proteolyticus (strain ATCC 35245 / DSM 5265 / OCM 4 / BT).